Reading from the N-terminus, the 225-residue chain is MNSIEFPLLDRTTQNSVISTTSNDLSNWSRLSSLWPLLYGTSCCFIEFASLIGSRFDFDRYGLVPRSSPRQADLILTAGTVTMKMAPSLVRLYEQMPEPKYVIAMGACTITGGMFSTDSYSTVRGVDKLIPVDVYLPGCPPKPEAVIDAITKLRKKVSREISEDRIGSQQENRCFTTNHKFHVGRSTHTGNYDQGLLYQSPSTSEISSETFFKYKSSVSSHELVN.

[4Fe-4S] cluster-binding residues include Cys43, Cys44, Cys108, and Cys139.

It belongs to the complex I 20 kDa subunit family. NDH is composed of at least 16 different subunits, 5 of which are encoded in the nucleus. [4Fe-4S] cluster serves as cofactor.

The protein localises to the plastid. It localises to the chloroplast thylakoid membrane. It carries out the reaction a plastoquinone + NADH + (n+1) H(+)(in) = a plastoquinol + NAD(+) + n H(+)(out). The catalysed reaction is a plastoquinone + NADPH + (n+1) H(+)(in) = a plastoquinol + NADP(+) + n H(+)(out). Its function is as follows. NDH shuttles electrons from NAD(P)H:plastoquinone, via FMN and iron-sulfur (Fe-S) centers, to quinones in the photosynthetic chain and possibly in a chloroplast respiratory chain. The immediate electron acceptor for the enzyme in this species is believed to be plastoquinone. Couples the redox reaction to proton translocation, and thus conserves the redox energy in a proton gradient. The protein is NAD(P)H-quinone oxidoreductase subunit K, chloroplastic of Liriodendron tulipifera (Tuliptree).